Consider the following 525-residue polypeptide: GMP synthase [glutamine-hydrolyzing] (525 aa).

Residues Lys-8–Asn-207 enclose the Glutamine amidotransferase type-1 domain. Cys-85 functions as the Nucleophile in the catalytic mechanism. Active-site residues include His-181 and Glu-183. In terms of domain architecture, GMPS ATP-PPase spans Trp-208 to Arg-400. Ser-235–Ser-241 provides a ligand contact to ATP.

In terms of assembly, homodimer.

The catalysed reaction is XMP + L-glutamine + ATP + H2O = GMP + L-glutamate + AMP + diphosphate + 2 H(+). It participates in purine metabolism; GMP biosynthesis; GMP from XMP (L-Gln route): step 1/1. Its function is as follows. Catalyzes the synthesis of GMP from XMP. The polypeptide is GMP synthase [glutamine-hydrolyzing] (Shewanella frigidimarina (strain NCIMB 400)).